We begin with the raw amino-acid sequence, 161 residues long: Cytochrome b6-f complex subunit 4 (161 aa).

Helical transmembrane passes span Leu-37–Val-57, Leu-96–Glu-116, and Ser-132–Ile-152.

The protein belongs to the cytochrome b family. PetD subfamily. In terms of assembly, the 4 large subunits of the cytochrome b6-f complex are cytochrome b6, subunit IV (17 kDa polypeptide, PetD), cytochrome f and the Rieske protein, while the 4 small subunits are PetG, PetL, PetM and PetN. The complex functions as a dimer.

It localises to the cellular thylakoid membrane. Its function is as follows. Component of the cytochrome b6-f complex, which mediates electron transfer between photosystem II (PSII) and photosystem I (PSI), cyclic electron flow around PSI, and state transitions. The sequence is that of Cytochrome b6-f complex subunit 4 from Acaryochloris marina (strain MBIC 11017).